The sequence spans 56 residues: Large ribosomal subunit protein bL32 (56 aa).

Positions 1 to 26 are disordered; that stretch reads MAVQQNKKSRSKRGMRRSHDALSTAQ. Basic residues predominate over residues 7 to 16; the sequence is KKSRSKRGMR.

The protein belongs to the bacterial ribosomal protein bL32 family.

This Shewanella baltica (strain OS155 / ATCC BAA-1091) protein is Large ribosomal subunit protein bL32.